A 166-amino-acid chain; its full sequence is Phosphopantetheine adenylyltransferase (166 aa).

Residue Ser11 coordinates substrate. ATP-binding positions include 11-12 (SF) and His19. Residues Lys43, Val80, and Arg94 each contribute to the substrate site. ATP is bound by residues 95 to 97 (GLR), Glu105, and 130 to 136 (VRTITAT).

It belongs to the bacterial CoaD family. In terms of assembly, homohexamer. Mg(2+) is required as a cofactor.

The protein resides in the cytoplasm. It catalyses the reaction (R)-4'-phosphopantetheine + ATP + H(+) = 3'-dephospho-CoA + diphosphate. It participates in cofactor biosynthesis; coenzyme A biosynthesis; CoA from (R)-pantothenate: step 4/5. Functionally, reversibly transfers an adenylyl group from ATP to 4'-phosphopantetheine, yielding dephospho-CoA (dPCoA) and pyrophosphate. The sequence is that of Phosphopantetheine adenylyltransferase from Mesorhizobium japonicum (strain LMG 29417 / CECT 9101 / MAFF 303099) (Mesorhizobium loti (strain MAFF 303099)).